A 780-amino-acid chain; its full sequence is Pendrin (780 aa).

At 1–87 (MAAPGGRSEP…YRVKEWLLSD (87 aa)) the chain is on the cytoplasmic side. Residues 88 to 108 (VISGVSTGLVATLQGMAYALL) traverse the membrane as a helical segment. Position 109 (alanine 109) is a topological domain, extracellular. A helical transmembrane segment spans residues 110 to 130 (AVPVGYGLYSAFFPILTYFIF). The Cytoplasmic segment spans residues 131–135 (GTSRH). A helical transmembrane segment spans residues 136–156 (ISVGPFPVVSLMVGSVVLSMA). Residues 157–191 (PDEHFLVSSSNGTVLNTTMIDTAARDTARVLIASA) lie on the Extracellular side of the membrane. A helical transmembrane segment spans residues 192 to 212 (LTLLVGIIQLIFGGLQIGFIV). The Cytoplasmic portion of the chain corresponds to 213–218 (RYLADP). A helical membrane pass occupies residues 219–239 (LVGGFTTAAAFQVLVSQLKIV). Over 240-263 (LNVSTKNYNGVLSIIYTLVEIFQN) the chain is Extracellular. A helical transmembrane segment spans residues 264 to 284 (IGDTNLADFTAGLLTIVVCMA). Residues 285–295 (VKELNDRFRHK) are Cytoplasmic-facing. The helical transmembrane segment at 296–316 (IPVPIPIEVIVTIIATAISYG) threads the bilayer. The Extracellular portion of the chain corresponds to 317–344 (ANLEKNYNAGIVKSIPRGFLPPELPPVS). Residues 345–365 (LFSEMLAASFSIAVVAYAIAV) form a helical membrane-spanning segment. The Cytoplasmic portion of the chain corresponds to 366-384 (SVGKVYATKYDYTIDGNQE). A helical membrane pass occupies residues 385-405 (FIAFGISNIFSGFFSCFVATT). The Extracellular segment spans residues 406–421 (ALSRTAVQESTGGKTQ). A helical transmembrane segment spans residues 422–442 (VAGIISAAIVMIAILALGKLL). The Cytoplasmic portion of the chain corresponds to 443 to 448 (EPLQKS). Residues 449–469 (VLAAVVIANLKGMFMQLCDIP) form a helical membrane-spanning segment. Residues 470-486 (RLWRQNKIDAVIWVFTC) lie on the Extracellular side of the membrane. The helical transmembrane segment at 487–507 (IVSIILGLDLGLLAGLIFGLL) threads the bilayer. Topologically, residues 508–780 (TVVLRVQFPS…QDEAMRTLAS (273 aa)) are cytoplasmic. An STAS domain is found at 535–729 (NYKNIEEPQG…LTVHDAILYL (195 aa)).

This sequence belongs to the SLC26A/SulP transporter (TC 2.A.53) family. Interacts with IQGAP1; this interaction enhances the chloride-bicarbonate exchange activity of SLC26A4. Highly expressed in the kidney (at protein level). High expression in adult thyroid, lower expression in adult and fetal kidney and fetal brain. Not expressed in other tissues.

The protein localises to the cell membrane. It localises to the apical cell membrane. It carries out the reaction chloride(in) = chloride(out). The enzyme catalyses iodide(out) = iodide(in). It catalyses the reaction hydrogencarbonate(in) + chloride(out) = hydrogencarbonate(out) + chloride(in). The catalysed reaction is iodide(in) + hydrogencarbonate(out) = iodide(out) + hydrogencarbonate(in). It carries out the reaction iodide(in) + chloride(out) = iodide(out) + chloride(in). The enzyme catalyses formate(in) + chloride(out) = formate(out) + chloride(in). Sodium-independent transporter of chloride and iodide. Mediates electroneutral chloride-bicarbonate, chloride-iodide and chloride-formate exchange with 1:1 stoichiometry. Mediates electroneutral iodide-bicarbonate exchange. The sequence is that of Pendrin (SLC26A4) from Homo sapiens (Human).